Reading from the N-terminus, the 69-residue chain is Brevinin-1Pb (69 aa).

Residues 1–20 form the signal peptide; that stretch reads MFTLNKFLLLLFFLGTINLS. Residues 21–43 constitute a propeptide that is removed on maturation; it reads FCEEENAEEERIDEPDETDVEVE. Cysteines 63 and 69 form a disulfide.

Expressed by the skin glands.

The protein resides in the secreted. Its function is as follows. Antibacterial activity against Gram-positive bacterium S.aureus and Gram-negative bacterium E.coli. Has activity against C.albicans. The protein is Brevinin-1Pb of Lithobates pipiens (Northern leopard frog).